The chain runs to 274 residues: NH(3)-dependent NAD(+) synthetase (274 aa).

46–53 is an ATP binding site; it reads GISGGQDS. Position 52 (aspartate 52) interacts with Mg(2+). Arginine 140 is a binding site for deamido-NAD(+). Threonine 160 is a binding site for ATP. Residue glutamate 165 participates in Mg(2+) binding. Deamido-NAD(+)-binding residues include lysine 173 and aspartate 180. ATP contacts are provided by lysine 189 and threonine 211. 260–261 lines the deamido-NAD(+) pocket; that stretch reads HK.

The protein belongs to the NAD synthetase family. In terms of assembly, homodimer.

The catalysed reaction is deamido-NAD(+) + NH4(+) + ATP = AMP + diphosphate + NAD(+) + H(+). Its pathway is cofactor biosynthesis; NAD(+) biosynthesis; NAD(+) from deamido-NAD(+) (ammonia route): step 1/1. Catalyzes the ATP-dependent amidation of deamido-NAD to form NAD. Uses ammonia as a nitrogen source. The protein is NH(3)-dependent NAD(+) synthetase of Streptococcus pneumoniae (strain 70585).